Reading from the N-terminus, the 278-residue chain is 3-oxoacyl-[acyl-carrier-protein] reductase (278 aa).

NADP(+)-binding residues include T13, R14, I16, S36, S40, T44, D66, F67, E77, G122, Q125, and E126. The Proton donor role is filled by S182. The NADP(+) site is built by Y198, K202, L230, and V231. Catalysis depends on Y198, which acts as the Proton acceptor. K202 serves as the catalytic Lowers pKa of active site Tyr.

Belongs to the short-chain dehydrogenases/reductases (SDR) family.

It localises to the mitochondrion. The catalysed reaction is a (3R)-hydroxyacyl-[ACP] + NADP(+) = a 3-oxoacyl-[ACP] + NADPH + H(+). The protein operates within lipid metabolism; fatty acid biosynthesis. Functionally, involved in biosynthesis of fatty acids in mitochondria. The sequence is that of 3-oxoacyl-[acyl-carrier-protein] reductase (OAR1) from Saccharomyces cerevisiae (strain ATCC 204508 / S288c) (Baker's yeast).